The following is a 678-amino-acid chain: Glycine--tRNA ligase beta subunit (678 aa).

The protein belongs to the class-II aminoacyl-tRNA synthetase family. In terms of assembly, tetramer of two alpha and two beta subunits.

Its subcellular location is the cytoplasm. The enzyme catalyses tRNA(Gly) + glycine + ATP = glycyl-tRNA(Gly) + AMP + diphosphate. In Streptococcus pneumoniae (strain ATCC BAA-255 / R6), this protein is Glycine--tRNA ligase beta subunit.